The chain runs to 197 residues: Phosphoheptose isomerase (197 aa).

Positions 41–197 constitute an SIS domain; the sequence is VVETFRRGGK…EIVERTLFEE (157 aa). Residue 56–58 participates in substrate binding; sequence NGG. Zn(2+) contacts are provided by H65 and E69. Substrate contacts are provided by residues E69, 98 to 99, 124 to 126, S129, and Q176; these read ND and STS. 2 residues coordinate Zn(2+): Q176 and H184.

It belongs to the SIS family. GmhA subfamily. The cofactor is Zn(2+).

It is found in the cytoplasm. It catalyses the reaction 2 D-sedoheptulose 7-phosphate = D-glycero-alpha-D-manno-heptose 7-phosphate + D-glycero-beta-D-manno-heptose 7-phosphate. Its pathway is carbohydrate biosynthesis; D-glycero-D-manno-heptose 7-phosphate biosynthesis; D-glycero-alpha-D-manno-heptose 7-phosphate and D-glycero-beta-D-manno-heptose 7-phosphate from sedoheptulose 7-phosphate: step 1/1. Catalyzes the isomerization of sedoheptulose 7-phosphate in D-glycero-D-manno-heptose 7-phosphate. The chain is Phosphoheptose isomerase from Roseiflexus sp. (strain RS-1).